The following is a 418-amino-acid chain: 26S proteasome regulatory subunit 6B (418 aa).

Residue Met1 is modified to N-acetylmethionine. Ser21 is modified (phosphoserine). Position 25 is a phosphothreonine (Thr25). At Ser28 the chain carries Phosphoserine. Gly206–Thr213 serves as a coordination point for ATP. 2 positions are modified to N6-acetyllysine: Lys397 and Lys401.

This sequence belongs to the AAA ATPase family. In terms of assembly, component of the 19S proteasome regulatory particle complex. The 26S proteasome consists of a 20S core particle (CP) and two 19S regulatory subunits (RP). The regulatory particle is made of a lid composed of 9 subunits, a base containing 6 ATPases including PSMC4 and few additional components. Interacts with NR1I3. Interacts with PAAF1. Interacts with TRIM5. Interacts with ZFAND1.

It localises to the cytoplasm. The protein localises to the nucleus. Component of the 26S proteasome, a multiprotein complex involved in the ATP-dependent degradation of ubiquitinated proteins. This complex plays a key role in the maintenance of protein homeostasis by removing misfolded or damaged proteins, which could impair cellular functions, and by removing proteins whose functions are no longer required. Therefore, the proteasome participates in numerous cellular processes, including cell cycle progression, apoptosis, or DNA damage repair. PSMC4 belongs to the heterohexameric ring of AAA (ATPases associated with diverse cellular activities) proteins that unfolds ubiquitinated target proteins that are concurrently translocated into a proteolytic chamber and degraded into peptides. This Bos taurus (Bovine) protein is 26S proteasome regulatory subunit 6B (PSMC4).